Consider the following 287-residue polypeptide: Shikimate dehydrogenase (NADP(+)) (287 aa).

Residues 20–22 (SRS) and T67 contribute to the shikimate site. K71 acts as the Proton acceptor in catalysis. E84 contacts NADP(+). Residues N93 and D108 each coordinate shikimate. Residues 132 to 136 (GAGGA), 156 to 161 (NRTAAR), and M226 contribute to the NADP(+) site. Y228 provides a ligand contact to shikimate. G250 lines the NADP(+) pocket.

The protein belongs to the shikimate dehydrogenase family. Homodimer.

The catalysed reaction is shikimate + NADP(+) = 3-dehydroshikimate + NADPH + H(+). It participates in metabolic intermediate biosynthesis; chorismate biosynthesis; chorismate from D-erythrose 4-phosphate and phosphoenolpyruvate: step 4/7. In terms of biological role, involved in the biosynthesis of the chorismate, which leads to the biosynthesis of aromatic amino acids. Catalyzes the reversible NADPH linked reduction of 3-dehydroshikimate (DHSA) to yield shikimate (SA). This chain is Shikimate dehydrogenase (NADP(+)), found in Bordetella bronchiseptica (strain ATCC BAA-588 / NCTC 13252 / RB50) (Alcaligenes bronchisepticus).